We begin with the raw amino-acid sequence, 442 residues long: MATVTRFAPSPTGKLHVGNVRTALHNWLLAKKTGGRFLLRIDDTDAERSREEYVESIRADLQWLGLIPDGEERQSLRTELYEREFQRLVEAGRIYRAYETAQELDLKRKILLGRGLPPIYDRAALKLTEADHAAKAAAGERPHWRFLLDHDQPITWDDGIRGPQSFDPRQMSDPVIRRADGSWLYMLPSAIDDIAMGITDVLRGEDHVSNTATQIQMFTALGAEPPRFAHEALLTGSEGKLSKRLGALGMADFREQGIEPEAIVALLARLGTSDPVDAALDAAALATSFDLSRFGRAPARFDEADLHRVNAQIVHRLPYARVAHLLPQGMGEAAWEAIRPNLAHIDEARDWWNVVTGPVTAPTFDDETRAFLAQAAKTAASLDWSADPWRALTATLKDGTGRKGKALFLPLRQALTGHDHGPEMAALLPLIAQDEAVRRLSA.

Residues 9-19 (PSPTGKLHVGN) carry the 'HIGH' region motif. Residues 240–244 (KLSKR) carry the 'KMSKS' region motif. Residue Lys243 coordinates ATP.

Belongs to the class-I aminoacyl-tRNA synthetase family. Glutamate--tRNA ligase type 1 subfamily. Monomer.

The protein resides in the cytoplasm. The enzyme catalyses tRNA(Glu) + L-glutamate + ATP = L-glutamyl-tRNA(Glu) + AMP + diphosphate. Functionally, catalyzes the attachment of glutamate to tRNA(Glu) in a two-step reaction: glutamate is first activated by ATP to form Glu-AMP and then transferred to the acceptor end of tRNA(Glu). The polypeptide is Glutamate--tRNA ligase 1 (Novosphingobium aromaticivorans (strain ATCC 700278 / DSM 12444 / CCUG 56034 / CIP 105152 / NBRC 16084 / F199)).